Reading from the N-terminus, the 305-residue chain is Energy-coupling factor transporter ATP-binding protein EcfA2 (305 aa).

The 250-residue stretch at 13–262 (LQNVDITFTN…KNLLQELLIE (250 aa)) folds into the ABC transporter domain. Residue 55 to 62 (GSTGSGKS) coordinates ATP.

Belongs to the ABC transporter superfamily. Energy-coupling factor EcfA family. In terms of assembly, forms a stable energy-coupling factor (ECF) transporter complex composed of 2 membrane-embedded substrate-binding proteins (S component), 2 ATP-binding proteins (A component) and 2 transmembrane proteins (T component).

The protein localises to the cell membrane. Its function is as follows. ATP-binding (A) component of a common energy-coupling factor (ECF) ABC-transporter complex. Unlike classic ABC transporters this ECF transporter provides the energy necessary to transport a number of different substrates. The sequence is that of Energy-coupling factor transporter ATP-binding protein EcfA2 from Spiroplasma kunkelii.